A 607-amino-acid polypeptide reads, in one-letter code: UvrABC system protein C (607 aa).

The GIY-YIG domain maps to 16-94 (GRPGVYRMFD…IKEWRPPYNI (79 aa)). Positions 203 to 238 (NALSDELNATMEKAAMALDFERAAELRDQVALLRRV) constitute a UVR domain.

This sequence belongs to the UvrC family. Interacts with UvrB in an incision complex.

The protein resides in the cytoplasm. Its function is as follows. The UvrABC repair system catalyzes the recognition and processing of DNA lesions. UvrC both incises the 5' and 3' sides of the lesion. The N-terminal half is responsible for the 3' incision and the C-terminal half is responsible for the 5' incision. The chain is UvrABC system protein C from Pseudomonas savastanoi pv. phaseolicola (strain 1448A / Race 6) (Pseudomonas syringae pv. phaseolicola (strain 1448A / Race 6)).